Here is a 68-residue protein sequence, read N- to C-terminus: MIRMGFFLTLTVAVLLTSLTCSEAVPTDKREMERLFDRILLKDQRQCPYCVVHCCPPSYCQASGCRPP.

The first 24 residues, 1-24, serve as a signal peptide directing secretion; sequence MIRMGFFLTLTVAVLLTSLTCSEA. A propeptide spanning residues 25–45 is cleaved from the precursor; it reads VPTDKREMERLFDRILLKDQR. Glutamine 46 bears the Pyrrolidone carboxylic acid mark. 3 disulfides stabilise this stretch: cysteine 47–cysteine 55, cysteine 50–cysteine 60, and cysteine 54–cysteine 65.

This sequence belongs to the conotoxin U superfamily. Expressed by the venom duct.

It is found in the secreted. In terms of biological role, probable toxin. This Conus amadis (Amadis cone) protein is Conotoxin Am6.8.